Reading from the N-terminus, the 301-residue chain is GVLILSGDHLYRMDYMDFVQSHRQRDAGISICCLPIDGSRASDFGLMKIDDTGRVISFSEKPRGADLKEMEEAEKKPYIASMGVYIFKKEILLNLLRWRFPTANDFGSEIIPAAAREINVKAYLFNDYWEDIGTIKSFFEANLALAEQPSKFSFYDASKPMYTSRRNLPPSMISGSKITDSIISHGCFLDKCRVEHSVVGIRSRIGSNVHLKDTVMLGADFYETDMERGDQLAEGKVPIGIGENTSIQNCIIDKNARIGKNVTIANAEGVQEADRASEGFHIRSGITVVLKNSVIADGLVI.

This sequence belongs to the bacterial/plant glucose-1-phosphate adenylyltransferase family. In terms of assembly, heterotetramer.

Its subcellular location is the plastid. The protein resides in the chloroplast. It is found in the amyloplast. The catalysed reaction is alpha-D-glucose 1-phosphate + ATP + H(+) = ADP-alpha-D-glucose + diphosphate. It participates in glycan biosynthesis; starch biosynthesis. With respect to regulation, insensitive to 3'phosphoglycerate and orthophosphate. In terms of biological role, this protein plays a role in synthesis of starch. It catalyzes the synthesis of the activated glycosyl donor, ADP-glucose from Glc-1-P and ATP. This chain is Glucose-1-phosphate adenylyltransferase large subunit (AGA.1), found in Triticum aestivum (Wheat).